We begin with the raw amino-acid sequence, 252 residues long: Hydroxyacylglutathione hydrolase (252 aa).

Zn(2+)-binding residues include His-54, His-56, Asp-58, His-59, His-111, Asp-128, and His-166.

This sequence belongs to the metallo-beta-lactamase superfamily. Glyoxalase II family. Monomer. Requires Zn(2+) as cofactor.

The catalysed reaction is an S-(2-hydroxyacyl)glutathione + H2O = a 2-hydroxy carboxylate + glutathione + H(+). The protein operates within secondary metabolite metabolism; methylglyoxal degradation; (R)-lactate from methylglyoxal: step 2/2. Thiolesterase that catalyzes the hydrolysis of S-D-lactoyl-glutathione to form glutathione and D-lactic acid. The polypeptide is Hydroxyacylglutathione hydrolase (Vibrio campbellii (strain ATCC BAA-1116)).